A 190-amino-acid chain; its full sequence is Spermatogenesis-associated protein 12 (190 aa).

Expressed in testis.

The polypeptide is Spermatogenesis-associated protein 12 (SPATA12) (Homo sapiens (Human)).